A 443-amino-acid polypeptide reads, in one-letter code: UDP-N-acetylmuramate--L-alanine ligase (443 aa).

110–116 (GAHGKTS) provides a ligand contact to ATP.

Belongs to the MurCDEF family.

The protein localises to the cytoplasm. The catalysed reaction is UDP-N-acetyl-alpha-D-muramate + L-alanine + ATP = UDP-N-acetyl-alpha-D-muramoyl-L-alanine + ADP + phosphate + H(+). It participates in cell wall biogenesis; peptidoglycan biosynthesis. In terms of biological role, cell wall formation. The polypeptide is UDP-N-acetylmuramate--L-alanine ligase (Streptococcus gordonii (strain Challis / ATCC 35105 / BCRC 15272 / CH1 / DL1 / V288)).